The chain runs to 257 residues: Dihydroorotate dehydrogenase B (NAD(+)), electron transfer subunit (257 aa).

The FAD-binding FR-type domain occupies isoleucine 2–leucine 102. Residues arginine 53–serine 56, isoleucine 70–arginine 72, and glycine 77–threonine 78 each bind FAD. [2Fe-2S] cluster contacts are provided by cysteine 221, cysteine 226, cysteine 229, and cysteine 244.

Belongs to the PyrK family. In terms of assembly, heterotetramer of 2 PyrK and 2 PyrD type B subunits. The cofactor is [2Fe-2S] cluster. It depends on FAD as a cofactor.

The protein operates within pyrimidine metabolism; UMP biosynthesis via de novo pathway; orotate from (S)-dihydroorotate (NAD(+) route): step 1/1. In terms of biological role, responsible for channeling the electrons from the oxidation of dihydroorotate from the FMN redox center in the PyrD type B subunit to the ultimate electron acceptor NAD(+). In Bacillus caldolyticus, this protein is Dihydroorotate dehydrogenase B (NAD(+)), electron transfer subunit.